We begin with the raw amino-acid sequence, 106 residues long: Large ribosomal subunit protein uL24 (106 aa).

This sequence belongs to the universal ribosomal protein uL24 family. As to quaternary structure, part of the 50S ribosomal subunit.

In terms of biological role, one of two assembly initiator proteins, it binds directly to the 5'-end of the 23S rRNA, where it nucleates assembly of the 50S subunit. Its function is as follows. One of the proteins that surrounds the polypeptide exit tunnel on the outside of the subunit. In Clostridium acetobutylicum (strain ATCC 824 / DSM 792 / JCM 1419 / IAM 19013 / LMG 5710 / NBRC 13948 / NRRL B-527 / VKM B-1787 / 2291 / W), this protein is Large ribosomal subunit protein uL24.